We begin with the raw amino-acid sequence, 929 residues long: MTDYSKTVNLLESPFPMRGNLAKREPAWLKSWYEQKRYQKLREIAKGRPKFILHDGPPYANGDIHIGHAVNKILKDIIIRSKTQAGFDAPYVPGWDCHGLPIEVMVEKLHGKDMPKARFRELCREYAAEQIARQKKDFIRLGVLGDWDNPYLTMDFKTEADTVRMLGEIYKSGYLYRGAKPVQFCLDCGSSLAEAEVEYKDKVSPAIDVGYPFKDTAALATAFGLAGIEGKAFAVIWTTTPWTLPASQAVSAGADVVYQLIDTPTGKLVLAKDLAEDALKRYGFSDGIAILAETTGDKLENLHMNHPFLERDIPMLNGEHVTTDAGTGLVHTAPAHGLEDYAVCNKYGIELYNPVNAEGKYIGETPRVAGMRVWEANSVILQWLEETGNLLASSKIEHSYAHCWRHKTPLIYRATGQWFVGMDKAGADGKTLRDKAIKAVDDTEFFPSWGRARLEAMIEGRPDWVVSRQRYWGTPMTFFVHKETGELHPNSAELLEKVAQRIEEKGIEAWFSLDKGELLSAEDCEHYDKLSDTMDVWFDSGSTHYSVLKQREELDWPADLYLEGSDQHRGWFQSSMLTGCASSMGRAPYKQLLTHGFVVDQNGRKMSKSIGNVVAPQEVYNEFGADILRLWAASTDYSGELAISKEILKRVTESYRRIRNTLSFLFANLSDFNPIEDAVQQADMVEIDRYALVLARRLQERVAGDFYPRYAFHFAVKEMVSFCSEDLGAFYLDILKDRLYTTKADSRARRSAQTALYHITRSLVLLIAPILCFTGEEAWDIIGGGAEDSVLFHTWHEFPTINEKAEAELVKKWTAIREAREAVTAAIEPLRADKTVGSSLQAEAEITAPEEMAGYLNALGEELRFALLVSKAEVKVGSELAVAAKASDGEKCERCWHYTRDVGAVAGHETVCKRCAENVGGEGETRHYA.

The 'HIGH' region motif lies at 58-68; the sequence is PYANGDIHIGH. Residue E563 participates in L-isoleucyl-5'-AMP binding. The short motif at 605-609 is the 'KMSKS' region element; that stretch reads KMSKS. Residue K608 participates in ATP binding. 4 residues coordinate Zn(2+): C892, C895, C912, and C915.

Belongs to the class-I aminoacyl-tRNA synthetase family. IleS type 1 subfamily. As to quaternary structure, monomer. Requires Zn(2+) as cofactor.

The protein localises to the cytoplasm. The enzyme catalyses tRNA(Ile) + L-isoleucine + ATP = L-isoleucyl-tRNA(Ile) + AMP + diphosphate. In terms of biological role, catalyzes the attachment of isoleucine to tRNA(Ile). As IleRS can inadvertently accommodate and process structurally similar amino acids such as valine, to avoid such errors it has two additional distinct tRNA(Ile)-dependent editing activities. One activity is designated as 'pretransfer' editing and involves the hydrolysis of activated Val-AMP. The other activity is designated 'posttransfer' editing and involves deacylation of mischarged Val-tRNA(Ile). This chain is Isoleucine--tRNA ligase, found in Neisseria meningitidis serogroup A / serotype 4A (strain DSM 15465 / Z2491).